The primary structure comprises 92 residues: Small ribosomal subunit protein uS19c (92 aa).

It belongs to the universal ribosomal protein uS19 family.

The protein resides in the plastid. The protein localises to the chloroplast. In terms of biological role, protein S19 forms a complex with S13 that binds strongly to the 16S ribosomal RNA. This is Small ribosomal subunit protein uS19c (rps19) from Trieres chinensis (Marine centric diatom).